The primary structure comprises 502 residues: MSQEKYIMAIDQGTTSSRAIIFNKKGEKVSSSQKEFTQIFPQAGWVEHNANEIWNSVQSVIAGAFIESGVKPNQIEAIGITNQRETTVVWDKKTGLPIYNAIVWQSRQTAPLAEQLKSQGYVEKFHEKTGLIIDAYFSATKVRWILDHVEGAQERAEKGELLFGTIDTWLVWKLTDGAAHVTDYSNAARTMLYNIKELKWDDEILEILNIPKAILPEVRSNSEIYGKTAPFHFYGGEVPISGMAGDQQAALFGQLAFEPGMVKNTYGTGSFIIMNTGEEMQLSENNLLTTIGYGINGKVYYALEGSIFIAGSAIQWLRDGLRMVENSPESEKYARDSHNNDEVYVVPAFTGLGAPYWNQNARGSVFGLTRGTSKEDFIKATLQSIAYQVRDIIDTMQMDTQTAIQVLKVDGGAAMNNFLMQFQADILGIDIARAKNLETTALGAAFLAGLSVGYWKDLDELKLLNETGELFEPSMNESRKEQLYKGWKKAVKATQVFAEIDD.

T14 contacts ADP. Positions 14, 15, and 16 each coordinate ATP. Residue T14 coordinates sn-glycerol 3-phosphate. Residue R18 coordinates ADP. Sn-glycerol 3-phosphate-binding residues include R84, E85, and Y136. R84, E85, and Y136 together coordinate glycerol. H232 carries the phosphohistidine; by HPr modification. D246 is a binding site for sn-glycerol 3-phosphate. Glycerol is bound by residues D246 and Q247. T268 and G311 together coordinate ADP. 4 residues coordinate ATP: T268, G311, Q315, and G412. Residues G412 and N416 each contribute to the ADP site.

This sequence belongs to the FGGY kinase family. In terms of assembly, homotetramer and homodimer (in equilibrium). The phosphoenolpyruvate-dependent sugar phosphotransferase system (PTS), including enzyme I, and histidine-containing protein (HPr) are required for the phosphorylation, which leads to the activation of the enzyme.

It catalyses the reaction glycerol + ATP = sn-glycerol 3-phosphate + ADP + H(+). It participates in polyol metabolism; glycerol degradation via glycerol kinase pathway; sn-glycerol 3-phosphate from glycerol: step 1/1. With respect to regulation, activated by phosphorylation and inhibited by fructose 1,6-bisphosphate (FBP). In terms of biological role, key enzyme in the regulation of glycerol uptake and metabolism. Catalyzes the phosphorylation of glycerol to yield sn-glycerol 3-phosphate. This Streptococcus pneumoniae (strain P1031) protein is Glycerol kinase.